Reading from the N-terminus, the 114-residue chain is T cell receptor beta variable 10-2 (114 aa).

A signal peptide spans 1 to 21 (MGTRLFFYVALCLLWAGHRDA). An Ig-like domain is found at 22–114 (GITQSPRYKI…TSVYFCASSE (93 aa)). A disulfide bridge links Cys-42 with Cys-110.

As to quaternary structure, alpha-beta TR is a heterodimer composed of an alpha and beta chain; disulfide-linked. The alpha-beta TR is associated with the transmembrane signaling CD3 coreceptor proteins to form the TR-CD3 (TcR or TCR). The assembly of alpha-beta TR heterodimers with CD3 occurs in the endoplasmic reticulum where a single alpha-beta TR heterodimer associates with one CD3D-CD3E heterodimer, one CD3G-CD3E heterodimer and one CD247 homodimer forming a stable octameric structure. CD3D-CD3E and CD3G-CD3E heterodimers preferentially associate with TR alpha and TR beta chains, respectively. The association of the CD247 homodimer is the last step of TcR assembly in the endoplasmic reticulum and is required for transport to the cell surface.

It localises to the cell membrane. Functionally, v region of the variable domain of T cell receptor (TR) beta chain that participates in the antigen recognition. Alpha-beta T cell receptors are antigen specific receptors which are essential to the immune response and are present on the cell surface of T lymphocytes. Recognize peptide-major histocompatibility (MH) (pMH) complexes that are displayed by antigen presenting cells (APC), a prerequisite for efficient T cell adaptive immunity against pathogens. Binding of alpha-beta TR to pMH complex initiates TR-CD3 clustering on the cell surface and intracellular activation of LCK that phosphorylates the ITAM motifs of CD3G, CD3D, CD3E and CD247 enabling the recruitment of ZAP70. In turn ZAP70 phosphorylates LAT, which recruits numerous signaling molecules to form the LAT signalosome. The LAT signalosome propagates signal branching to three major signaling pathways, the calcium, the mitogen-activated protein kinase (MAPK) kinase and the nuclear factor NF-kappa-B (NF-kB) pathways, leading to the mobilization of transcription factors that are critical for gene expression and essential for T cell growth and differentiation. The T cell repertoire is generated in the thymus, by V-(D)-J rearrangement. This repertoire is then shaped by intrathymic selection events to generate a peripheral T cell pool of self-MH restricted, non-autoaggressive T cells. Post-thymic interaction of alpha-beta TR with the pMH complexes shapes TR structural and functional avidity. This is T cell receptor beta variable 10-2 from Homo sapiens (Human).